Here is a 976-residue protein sequence, read N- to C-terminus: Leucine--tRNA ligase (976 aa).

A compositionally biased stretch (low complexity) spans 1 to 23; that stretch reads MTESPTTTPGSTSGAPSGVPSGV. Positions 1 to 34 are disordered; that stretch reads MTESPTTTPGSTSGAPSGVPSGVNDAESDAPRHR. The short motif at 86-97 is the 'HIGH' region element; the sequence is PYPSGEGLHVGH. The 'KMSKS' region signature appears at 745 to 749; it reads KIGKS. Lysine 748 contacts ATP.

The protein belongs to the class-I aminoacyl-tRNA synthetase family.

It is found in the cytoplasm. The catalysed reaction is tRNA(Leu) + L-leucine + ATP = L-leucyl-tRNA(Leu) + AMP + diphosphate. The sequence is that of Leucine--tRNA ligase from Mycobacterium ulcerans (strain Agy99).